A 163-amino-acid polypeptide reads, in one-letter code: Calmodulin (163 aa).

Position 2 is an N-acetylalanine (A2). 4 consecutive EF-hand domains span residues 11–46, 47–82, 84–119, and 120–155; these read EQIA…LGQN, PTEA…KMKE, DHED…LGEK, and LSEE…GATD. Residues D24, D26, D28, T30, E35, D60, D62, N64, T66, E71, D97, D99, N101, E108, D133, D135, D137, Q139, and E144 each contribute to the Ca(2+) site.

It belongs to the calmodulin family. As to quaternary structure, associates with the spoke-associated complex containing CFAP61, CFAP91 and CFAP251; the association is calcium sensitive. Post-translationally, trimethylation of Lys-119 observed in other calmodulins is absent here.

It is found in the cytoplasm. The protein resides in the cytoskeleton. The protein localises to the flagellum axoneme. Its function is as follows. Calmodulin mediates the control of a large number of enzymes, ion channels and other proteins by Ca(2+). Among the enzymes to be stimulated by the calmodulin-Ca(2+) complex are a number of protein kinases and phosphatases. The sequence is that of Calmodulin from Chlamydomonas reinhardtii (Chlamydomonas smithii).